The sequence spans 143 residues: Small ribosomal subunit protein bS6 (143 aa).

A disordered region spans residues 98 to 143 (TEQSLIMKSKDEKGDKPERSERRRRDDEEGEAPAANDNDGDNAEAA). Residues 105–124 (KSKDEKGDKPERSERRRRDD) are compositionally biased toward basic and acidic residues.

The protein belongs to the bacterial ribosomal protein bS6 family.

Its function is as follows. Binds together with bS18 to 16S ribosomal RNA. The protein is Small ribosomal subunit protein bS6 of Xanthomonas euvesicatoria pv. vesicatoria (strain 85-10) (Xanthomonas campestris pv. vesicatoria).